Reading from the N-terminus, the 166-residue chain is Ribosome maturation factor RimM (166 aa).

Residues 94–166 (EGEYYHADLI…IVIEAAYADQ (73 aa)) form the PRC barrel domain.

The protein belongs to the RimM family. In terms of assembly, binds ribosomal protein uS19.

It localises to the cytoplasm. Functionally, an accessory protein needed during the final step in the assembly of 30S ribosomal subunit, possibly for assembly of the head region. Essential for efficient processing of 16S rRNA. May be needed both before and after RbfA during the maturation of 16S rRNA. It has affinity for free ribosomal 30S subunits but not for 70S ribosomes. The chain is Ribosome maturation factor RimM from Novosphingobium aromaticivorans (strain ATCC 700278 / DSM 12444 / CCUG 56034 / CIP 105152 / NBRC 16084 / F199).